A 274-amino-acid polypeptide reads, in one-letter code: 16S rRNA (guanine(1405)-N(7))-methyltransferase (274 aa).

S-adenosyl-L-methionine contacts are provided by residues phenylalanine 64, 102 to 104 (HVS), arginine 108, alanine 133, aspartate 156, 182 to 183 (DL), leucine 198, and glutamine 207.

This sequence belongs to the methyltransferase superfamily. Aminoglycoside resistance family.

The enzyme catalyses guanosine(1405) in 16S rRNA + S-adenosyl-L-methionine = N(7)-methylguanosine(1405) in 16S rRNA + S-adenosyl-L-homocysteine. Specifically methylates the N(7) position of guanine 1405 in 16S rRNA. Confers resistance to various aminoglycosides, including gentamicin and kanamycin. The sequence is that of 16S rRNA (guanine(1405)-N(7))-methyltransferase (grm) from Micromonospora echinospora (Micromonospora purpurea).